The primary structure comprises 482 residues: Putative alpha-L-fucosidase (482 aa).

An N-terminal signal peptide occupies residues 1–16 (MIFLIFSILFLHLANC). Residues Asn-182, Asn-343, Asn-359, and Asn-419 are each glycosylated (N-linked (GlcNAc...) asparagine).

The protein belongs to the glycosyl hydrolase 29 family.

It carries out the reaction an alpha-L-fucoside + H2O = L-fucose + an alcohol. Functionally, alpha-L-fucosidase is responsible for hydrolyzing the alpha-1,6-linked fucose joined to the reducing-end N-acetylglucosamine of the carbohydrate moieties of glycoproteins. The protein is Putative alpha-L-fucosidase of Caenorhabditis elegans.